Consider the following 195-residue polypeptide: Small ribosomal subunit protein uS10c (195 aa).

A chloroplast-targeting transit peptide spans 1-59; it reads MATSSISAALLSPLTLRNASSSSTKQDFSTLSSLNLRRTLTPTLQSGHTLSNSSNFATF.

The protein belongs to the universal ribosomal protein uS10 family. As to quaternary structure, component of the chloroplast small ribosomal subunit (SSU). Mature 70S chloroplast ribosomes of higher plants consist of a small (30S) and a large (50S) subunit. The 30S small subunit contains 1 molecule of ribosomal RNA (16S rRNA) and 24 different proteins. The 50S large subunit contains 3 rRNA molecules (23S, 5S and 4.5S rRNA) and 33 different proteins.

Its subcellular location is the plastid. The protein resides in the chloroplast. In terms of biological role, component of the chloroplast ribosome (chloro-ribosome), a dedicated translation machinery responsible for the synthesis of chloroplast genome-encoded proteins, including proteins of the transcription and translation machinery and components of the photosynthetic apparatus. The chain is Small ribosomal subunit protein uS10c (RPS10) from Spinacia oleracea (Spinach).